The sequence spans 71 residues: Disintegrin ussuristatin-2 (71 aa).

The Disintegrin domain maps to 1 to 71 (EAGEECDCGA…QSADCPRNGF (71 aa)). 6 disulfide bridges follow: Cys-6–Cys-21, Cys-8–Cys-16, Cys-15–Cys-38, Cys-29–Cys-35, Cys-34–Cys-59, and Cys-47–Cys-66. The Cell attachment site; atypical (KGD) signature appears at 51–53 (KGD).

The protein belongs to the venom metalloproteinase (M12B) family. P-II subfamily. P-IId sub-subfamily. As to quaternary structure, homodimer. As to expression, expressed by the venom gland.

Its subcellular location is the secreted. Functionally, suppress platelet aggregation induced by ADP, collagen, thrombin, and epinephrine (IC(50)=170-330 nM). Also dose-dependently inhibits the adhesion of human melanoma cells to fibrinogen but not to fibronectin. The protein is Disintegrin ussuristatin-2 of Gloydius ussuriensis (Ussuri mamushi).